Consider the following 57-residue polypeptide: uncharacterized protein (57 aa).

The chain crosses the membrane as a helical span at residues 34-51 (TALLDAAAVVVVPGLLAA).

Its subcellular location is the membrane. This is an uncharacterized protein from Dictyostelium discoideum (Social amoeba).